We begin with the raw amino-acid sequence, 284 residues long: Bifunctional protein FolD (284 aa).

NADP(+) is bound by residues 166–168 and isoleucine 232; that span reads GAS.

It belongs to the tetrahydrofolate dehydrogenase/cyclohydrolase family. In terms of assembly, homodimer.

The catalysed reaction is (6R)-5,10-methylene-5,6,7,8-tetrahydrofolate + NADP(+) = (6R)-5,10-methenyltetrahydrofolate + NADPH. The enzyme catalyses (6R)-5,10-methenyltetrahydrofolate + H2O = (6R)-10-formyltetrahydrofolate + H(+). It participates in one-carbon metabolism; tetrahydrofolate interconversion. Functionally, catalyzes the oxidation of 5,10-methylenetetrahydrofolate to 5,10-methenyltetrahydrofolate and then the hydrolysis of 5,10-methenyltetrahydrofolate to 10-formyltetrahydrofolate. The chain is Bifunctional protein FolD from Stutzerimonas stutzeri (strain A1501) (Pseudomonas stutzeri).